The following is a 337-amino-acid chain: Biotin synthase (337 aa).

A Radical SAM core domain is found at 58 to 288 (AGSELLHACS…AHPHKIIKFA (231 aa)). Cys-76, Cys-80, and Cys-83 together coordinate [4Fe-4S] cluster. Positions 155, 216, and 286 each coordinate [2Fe-2S] cluster.

Belongs to the radical SAM superfamily. Biotin synthase family. In terms of assembly, homodimer. The cofactor is [4Fe-4S] cluster. Requires [2Fe-2S] cluster as cofactor.

The catalysed reaction is (4R,5S)-dethiobiotin + (sulfur carrier)-SH + 2 reduced [2Fe-2S]-[ferredoxin] + 2 S-adenosyl-L-methionine = (sulfur carrier)-H + biotin + 2 5'-deoxyadenosine + 2 L-methionine + 2 oxidized [2Fe-2S]-[ferredoxin]. The protein operates within cofactor biosynthesis; biotin biosynthesis; biotin from 7,8-diaminononanoate: step 2/2. In terms of biological role, catalyzes the conversion of dethiobiotin (DTB) to biotin by the insertion of a sulfur atom into dethiobiotin via a radical-based mechanism. The chain is Biotin synthase from Pelodictyon phaeoclathratiforme (strain DSM 5477 / BU-1).